Consider the following 346-residue polypeptide: Protein STAR1 (346 aa).

Positions 23 to 48 are disordered; sequence QRPPPNGTVHACSKSRPPQLEPGKVG. Positions 112–344 constitute an ABC transporter domain; the sequence is IRVRGLTRRS…KHPMARRFLE (233 aa). 146–153 contributes to the ATP binding site; it reads GPSGSGKS.

It belongs to the ABC transporter superfamily. ABCI family. As to quaternary structure, interacts with STAR2. Expressed in roots.

Its subcellular location is the membrane. Functionally, associates with STAR2 to form a functional transmembrane ABC transporter required for detoxification of aluminum (Al) in roots. Can specifically transport UDP-glucose. The protein is Protein STAR1 of Oryza sativa subsp. japonica (Rice).